Consider the following 36-residue polypeptide: Photosystem I reaction center subunit VIII (36 aa).

Residues 1-21 (MITFSFPSIFVPLVGLVFPAI) traverse the membrane as a helical segment.

It belongs to the PsaI family.

It localises to the plastid. The protein localises to the chloroplast thylakoid membrane. In terms of biological role, may help in the organization of the PsaL subunit. The chain is Photosystem I reaction center subunit VIII from Coffea arabica (Arabian coffee).